The primary structure comprises 328 residues: Phosphate acetyltransferase (328 aa).

The protein belongs to the phosphate acetyltransferase and butyryltransferase family.

The protein localises to the cytoplasm. It carries out the reaction acetyl-CoA + phosphate = acetyl phosphate + CoA. It participates in metabolic intermediate biosynthesis; acetyl-CoA biosynthesis; acetyl-CoA from acetate: step 2/2. The sequence is that of Phosphate acetyltransferase (pta) from Thermoanaerobacterium thermosaccharolyticum (strain ATCC 7956 / DSM 571 / NCIMB 9385 / NCA 3814 / NCTC 13789 / WDCM 00135 / 2032) (Clostridium thermosaccharolyticum).